The sequence spans 1114 residues: MISTTISGKRPIEQVDDELLSLTAQQENEEQQQQRKRRRHQFAPMTQFNSNTLDEDSGFRSSSDVATADQDNFLEESPSGYIKKVILRNFMCHEHFELELGSRLNFIVGNNGSGKSAILTAITIGLGAKASETNRGSSLKDLIREGCYSAKIILHLDNSKYGAYQQGIFGNEIIVERIIKRDGPASFSLRSENGKEISNKKKDIQTVVDYFSVPVSNPMCFLSQDAARSFLTASTSQDKYSHFMKGTLLQEITENLLYASAIHDSAQENMALHLENLKSLKAEYEDAKKLLRELNQTSDLNERKMLLQAKSLWIDVAHNTDACKNLENEISGIQQKVDEVTEKIRNRQEKIERYTSDGTTIEAQIDAKVIYVNEKDSEHQNARELLRDVKSRFEKEKSNQAEAQSNIDQGRKKVDALNKTIAHLEEELTKEMGGDKDQMRQELEQLEKANEKLREVNNSLVVSLQDVKNEERDIQHERESELRTISRSIQNKKVELQNIAKGNDTFLMNFDRNMDRLLRTIEQRKNEFETPAIGPLGSLVTIRKGFEKWTRSIQRAISSSLNAFVVSNPKDNRLFRDIMRSCGIRSNIPIVTYCLSQFDYSKGRAHGNYPTIVDALEFSKPEIECLFVDLSRIERIVLIEDKNEARNFLQRNPVNVNMALSLRDRRSGFQLSGGYRLDTVTYQDKIRLKVNSSSDNGTQYLKDLIEQETKELQNIRDRYEEKLSEVRSRLKEIDGRLKSTKNEMRKTNFRMTELKMNVGKVVDTGILNSKINERKNQEQAIASYEAAKEELGLKIEQIAQEAQPIKEQYDSTKLALVEAQDELQQLKEDINSRQSKIQKYKDDTIYYEDKKKVYLENIKKIEVNVAALKEGIQRQIQNACAFCSKERIENVDLPDTQEEIKRELDKVSRMIQKAEKSLGLSQEEVIALFEKCRNKYKEGQKKYMEIDEALNRLHNSLKARDQNYKNAEKGTCFDADMDFRASLKVRKFSGNLSFIKDTKSLEIYILTTNDEKARNVDTLSGGEKSFSQMALLLATWKPMRSRIIALDEFDVFMDQVNRKIGTTLIVKKLKDIARTQTIIITPQDIGKIADIDSSGVSIHRMRDPERQNNSNFYN.

The segment at Gln-26–Asp-64 is disordered. Positions Arg-35 to Arg-39 match the Nuclear localization signal motif. Gly-109–Ser-116 is a binding site for ATP. A coiled-coil region spans residues Ala-259–Glu-529. Positions Thr-530–Asp-695 are flexible hinge. Residues Asn-696–Lys-969 adopt a coiled-coil conformation.

It belongs to the SMC family. SMC6 subfamily. In terms of assembly, component of the Smc5-Smc6 complex which consists of KRE29, MMS21, NSE1, NSE3, NSE4, NSE5, SMC5 and SMC6.

The protein localises to the nucleus. It localises to the chromosome. Its function is as follows. Acts in a DNA repair pathway for removal of UV-induced DNA damage that is distinct from classical nucleotide excision repair and in repair of ionizing radiation damage. Functions in homologous recombination repair of DNA double strand breaks and in recovery of stalled replication forks. Probably plays a role in structure. The sequence is that of Structural maintenance of chromosomes protein 6 (SMC6) from Saccharomyces cerevisiae (strain ATCC 204508 / S288c) (Baker's yeast).